We begin with the raw amino-acid sequence, 107 residues long: Iron-binding protein IscA (107 aa).

3 residues coordinate Fe cation: cysteine 35, cysteine 99, and cysteine 101.

This sequence belongs to the HesB/IscA family. As to quaternary structure, homodimer; may form tetramers and higher multimers. Fe cation is required as a cofactor.

In terms of biological role, is able to transfer iron-sulfur clusters to apo-ferredoxin. Multiple cycles of [2Fe2S] cluster formation and transfer are observed, suggesting that IscA acts catalytically. Recruits intracellular free iron so as to provide iron for the assembly of transient iron-sulfur cluster in IscU in the presence of IscS, L-cysteine and the thioredoxin reductase system TrxA/TrxB. In Cronobacter sakazakii (strain ATCC BAA-894) (Enterobacter sakazakii), this protein is Iron-binding protein IscA.